The chain runs to 547 residues: CTP synthase (547 aa).

The tract at residues 1-265 (MTRYVFITGG…DEIVLRKLHI (265 aa)) is amidoligase domain. Ser-13 is a CTP binding site. Ser-13 lines the UTP pocket. Residues 14 to 19 (SLGKGI) and Asp-71 each bind ATP. Asp-71 and Glu-139 together coordinate Mg(2+). Residues 146-148 (DIE), 186-191 (KTKPTQ), and Lys-222 each bind CTP. UTP-binding positions include 186–191 (KTKPTQ) and Lys-222. The 252-residue stretch at 290–541 (TVGMVGKYVD…IRAARAQHEK (252 aa)) folds into the Glutamine amidotransferase type-1 domain. Gly-351 lines the L-glutamine pocket. Catalysis depends on Cys-378, which acts as the Nucleophile; for glutamine hydrolysis. Residues 379–382 (LGMQ), Glu-402, and Arg-469 contribute to the L-glutamine site. Residues His-514 and Glu-516 contribute to the active site.

It belongs to the CTP synthase family. In terms of assembly, homotetramer.

It carries out the reaction UTP + L-glutamine + ATP + H2O = CTP + L-glutamate + ADP + phosphate + 2 H(+). The catalysed reaction is L-glutamine + H2O = L-glutamate + NH4(+). The enzyme catalyses UTP + NH4(+) + ATP = CTP + ADP + phosphate + 2 H(+). It participates in pyrimidine metabolism; CTP biosynthesis via de novo pathway; CTP from UDP: step 2/2. Its activity is regulated as follows. Allosterically activated by GTP, when glutamine is the substrate; GTP has no effect on the reaction when ammonia is the substrate. The allosteric effector GTP functions by stabilizing the protein conformation that binds the tetrahedral intermediate(s) formed during glutamine hydrolysis. Inhibited by the product CTP, via allosteric rather than competitive inhibition. Its function is as follows. Catalyzes the ATP-dependent amination of UTP to CTP with either L-glutamine or ammonia as the source of nitrogen. Regulates intracellular CTP levels through interactions with the four ribonucleotide triphosphates. This chain is CTP synthase, found in Thioalkalivibrio sulfidiphilus (strain HL-EbGR7).